A 567-amino-acid chain; its full sequence is Urease subunit alpha 1 (567 aa).

Positions 128 to 567 (GAVDTHVHYI…LPLAQLYHLF (440 aa)) constitute a Urease domain. Positions 133, 135, and 216 each coordinate Ni(2+). K216 carries the N6-carboxylysine modification. Residue H218 participates in substrate binding. Ni(2+) contacts are provided by H245 and H271. H319 (proton donor) is an active-site residue. Residue D359 participates in Ni(2+) binding.

This sequence belongs to the metallo-dependent hydrolases superfamily. Urease alpha subunit family. As to quaternary structure, heterotrimer of UreA (gamma), UreB (beta) and UreC (alpha) subunits. Three heterotrimers associate to form the active enzyme. Requires Ni cation as cofactor. Post-translationally, carboxylation allows a single lysine to coordinate two nickel ions.

It localises to the cytoplasm. The enzyme catalyses urea + 2 H2O + H(+) = hydrogencarbonate + 2 NH4(+). It participates in nitrogen metabolism; urea degradation; CO(2) and NH(3) from urea (urease route): step 1/1. The polypeptide is Urease subunit alpha 1 (Psychrobacter cryohalolentis (strain ATCC BAA-1226 / DSM 17306 / VKM B-2378 / K5)).